The chain runs to 242 residues: Small ribosomal subunit protein uS2 (242 aa).

The protein belongs to the universal ribosomal protein uS2 family.

This chain is Small ribosomal subunit protein uS2, found in Vibrio parahaemolyticus serotype O3:K6 (strain RIMD 2210633).